Reading from the N-terminus, the 591-residue chain is Probable translation initiation factor IF-2 (591 aa).

The tr-type G domain maps to 6 to 220 (IRTPIVCVMG…IMIGLAQRYM (215 aa)). A G1 region spans residues 15 to 22 (GHVDHGKT). 15–22 (GHVDHGKT) is a binding site for GTP. The G2 stretch occupies residues 40–44 (AITQH). Positions 76-79 (DTPG) are G3. GTP is bound by residues 76–80 (DTPGH) and 130–133 (TKVD). The G4 stretch occupies residues 130–133 (TKVD). The G5 stretch occupies residues 198–200 (SAH).

The protein belongs to the TRAFAC class translation factor GTPase superfamily. Classic translation factor GTPase family. IF-2 subfamily.

Functionally, function in general translation initiation by promoting the binding of the formylmethionine-tRNA to ribosomes. Seems to function along with eIF-2. The polypeptide is Probable translation initiation factor IF-2 (Methanoregula boonei (strain DSM 21154 / JCM 14090 / 6A8)).